The primary structure comprises 362 residues: tRNA/tmRNA (uracil-C(5))-methyltransferase (362 aa).

Residues Gln186, Tyr214, Asn219, Glu235, and Asp295 each coordinate S-adenosyl-L-methionine. Catalysis depends on Cys320, which acts as the Nucleophile. Glu354 serves as the catalytic Proton acceptor.

It belongs to the class I-like SAM-binding methyltransferase superfamily. RNA M5U methyltransferase family. TrmA subfamily.

It catalyses the reaction uridine(54) in tRNA + S-adenosyl-L-methionine = 5-methyluridine(54) in tRNA + S-adenosyl-L-homocysteine + H(+). It carries out the reaction uridine(341) in tmRNA + S-adenosyl-L-methionine = 5-methyluridine(341) in tmRNA + S-adenosyl-L-homocysteine + H(+). Functionally, dual-specificity methyltransferase that catalyzes the formation of 5-methyluridine at position 54 (m5U54) in all tRNAs, and that of position 341 (m5U341) in tmRNA (transfer-mRNA). This chain is tRNA/tmRNA (uracil-C(5))-methyltransferase, found in Ectopseudomonas mendocina (strain ymp) (Pseudomonas mendocina).